A 463-amino-acid polypeptide reads, in one-letter code: Retinoic acid receptor RXR-gamma (463 aa).

Residues 1–138 (MYGNYSHFMK…TSPGSLVKHI (138 aa)) are modulating. The disordered stretch occupies residues 18–53 (SPGHTGSTSMSPSAALSTGKPMDSHPSYTDTPVSAP). Positions 21 to 33 (HTGSTSMSPSAAL) are enriched in polar residues. A DNA-binding region (nuclear receptor) is located at residues 136 to 211 (KHICAICGDR…MGMKREAVQE (76 aa)). 2 NR C4-type zinc fingers span residues 139 to 159 (CAIC…CEGC) and 175 to 199 (CRDN…YQKC). The hinge stretch occupies residues 205-230 (KREAVQEERQRSRERAESEAECATSG). The NR LBD domain maps to 231–459 (HEDMPVERIL…TFLMEMLETP (229 aa)).

It belongs to the nuclear hormone receptor family. NR2 subfamily. As to quaternary structure, homodimer. Heterodimer with a RAR molecule. Binds DNA preferentially as a RAR/RXR heterodimer. Interacts with RARA. Acetylated by EP300. Expressed in aortic endothelial cells (at protein level).

The protein localises to the nucleus. The protein resides in the cytoplasm. Receptor for retinoic acid. Retinoic acid receptors bind as heterodimers to their target response elements in response to their ligands, all-trans or 9-cis retinoic acid, and regulate gene expression in various biological processes. The RAR/RXR heterodimers bind to the retinoic acid response elements (RARE) composed of tandem 5'-AGGTCA-3' sites known as DR1-DR5. The high affinity ligand for RXRs is 9-cis retinoic acid. The polypeptide is Retinoic acid receptor RXR-gamma (RXRG) (Homo sapiens (Human)).